A 196-amino-acid polypeptide reads, in one-letter code: Ras-related protein RabC (196 aa).

Residue 13-20 (GESGVGKS) coordinates GTP. The Effector region signature appears at 35 to 43 (FAPTLGVDF). GTP contacts are provided by residues 63-67 (DTAGQ) and 121-124 (NKSD). 2 S-geranylgeranyl cysteine lipidation sites follow: C195 and C196.

This sequence belongs to the small GTPase superfamily. Rab family.

The protein localises to the cell membrane. The sequence is that of Ras-related protein RabC (rabC) from Dictyostelium discoideum (Social amoeba).